A 349-amino-acid polypeptide reads, in one-letter code: Farnesyl pyrophosphate synthase vrtD (349 aa).

Isopentenyl diphosphate-binding residues include lysine 53, arginine 56, and glutamine 92. The Mg(2+) site is built by aspartate 99 and aspartate 103. Residue arginine 108 participates in dimethylallyl diphosphate binding. Arginine 109 provides a ligand contact to isopentenyl diphosphate. Lysine 196, threonine 197, glutamine 236, lysine 253, and lysine 262 together coordinate dimethylallyl diphosphate.

The protein belongs to the FPP/GGPP synthase family. Mg(2+) is required as a cofactor.

The catalysed reaction is isopentenyl diphosphate + dimethylallyl diphosphate = (2E)-geranyl diphosphate + diphosphate. The enzyme catalyses isopentenyl diphosphate + (2E)-geranyl diphosphate = (2E,6E)-farnesyl diphosphate + diphosphate. It participates in secondary metabolite biosynthesis; terpenoid biosynthesis. In terms of biological role, farnesyl pyrophosphate synthase; part of the gene cluster that mediates the biosynthesis of viridicatumtoxin, a tetracycline-like fungal meroterpenoid with a unique, fused spirobicyclic ring system. The first step of the pathway is the production of the malonamoyl-CoA starter unit for the polyketide synthase vrtA. The aldolase vrtJ may be involved in the synthesis of the malonamate substrate for malonamoyl-CoA synthetase vrtB. The polyketide synthase vrtA then may utilize the malonamoyl-CoA starter unit, followed by sequential condensation of eight malonyl-CoA units to form the polyketide backbone. The cyclization of the last ring could be mediated by the lactamase-like protein vrtG. The proposed post-PKS tailoring steps are a hydroxylation at C5 catalyzed the cytochrome P450 monooxygenase vrtE, a hydroxylation at C12a catalyzed by VrtH and/or VrtI, and an O-methylation by the O-methyltransferase vrtF. VrtC is then proposed to catalyze the transfer of a geranyl group synthesized by vrtD to the aromatic C ring of the tetracyclic polyketide intermediate of viridicatumtoxin to yield previridicatumtoxin. Finally, the cytochrome P450 monooxygenase vrtK catalyzes the spirocyclization of the geranyl moiety of previridicatumtoxin to afford viridicatumtoxin. This Penicillium aethiopicum protein is Farnesyl pyrophosphate synthase vrtD.